A 295-amino-acid chain; its full sequence is Putative F-box protein At5g44220 (295 aa).

An F-box domain is found at 56 to 102 (STNSDLLPMDLIKEILKRLPAKTLARFLCVSKLWSSIIRSRDLMKLF).

The sequence is that of Putative F-box protein At5g44220 from Arabidopsis thaliana (Mouse-ear cress).